Here is a 605-residue protein sequence, read N- to C-terminus: Inactive LRR receptor-like serine/threonine-protein kinase BIR2 (605 aa).

A signal peptide spans Met-1 to Ala-28. The Extracellular segment spans residues Ala-29 to Gly-229. Asn-58 is a glycosylation site (N-linked (GlcNAc...) asparagine). 4 LRR repeats span residues Cys-101–Trp-125, Pro-127–Cys-150, Phe-152–Ala-173, and Leu-174–Ser-197. Residues Ile-230–Trp-250 form a helical membrane-spanning segment. Over Trp-251–Val-605 the chain is Cytoplasmic. Ser-271 carries the phosphoserine; by BAK1 modification. Thr-283 bears the Phosphothreonine; by BAK1 mark. Ser-286 is subject to Phosphoserine; by BAK1. The residue at position 304 (Thr-304) is a Phosphothreonine; by BAK1. The 272-residue stretch at Phe-307 to Ile-578 folds into the Protein kinase domain. Ile-313–Thr-321 is an ATP binding site. Position 330 is a phosphoserine; by BAK1 (Ser-330). Lys-335 serves as a coordination point for ATP. A Phosphoserine; by BAK1 modification is found at Ser-389. Thr-402 carries the post-translational modification Phosphothreonine. Phosphoserine; by BAK1 is present on residues Ser-448 and Ser-462. Thr-466 carries the phosphothreonine; by BAK1 modification. Tyr-479 is subject to Phosphotyrosine. Thr-482 bears the Phosphothreonine mark. Residue Ser-486 is modified to Phosphoserine. A Phosphothreonine; by BAK1 modification is found at Thr-533.

The protein belongs to the protein kinase superfamily. Ser/Thr protein kinase family. In terms of assembly, interacts constitutively with BAK1, when phosphorylated, thereby preventing interaction with the ligand-binding LRR-RLK FLS2. Upon infection, pathogen-associated molecular patterns (PAMP) perception leads to BIR2 release from the BAK1 complex and enables the recruitment of BAK1 into the FLS2 complex. Phosphorylated by BAK1, this interacts promotes interaction with BAK1.

It is found in the cell membrane. In terms of biological role, pseudokinases lacking protein kinase activity and unable to bind ATP-analogs. Negative regulator of pathogen-associated molecular patterns- (PAMP-) triggered immunity by limiting BAK1-receptor complex formation in the absence of ligands. The protein is Inactive LRR receptor-like serine/threonine-protein kinase BIR2 of Arabidopsis thaliana (Mouse-ear cress).